Reading from the N-terminus, the 235-residue chain is Sugar fermentation stimulation protein homolog (235 aa).

It belongs to the SfsA family.

The sequence is that of Sugar fermentation stimulation protein homolog from Aliivibrio fischeri (strain ATCC 700601 / ES114) (Vibrio fischeri).